Here is a 261-residue protein sequence, read N- to C-terminus: SLA class II histocompatibility antigen, DQ haplotype C beta chain (261 aa).

The first 31 residues, 1-31 (MSGMVALRLPRGLWTAALTVMLVVLGAPVAE), serve as a signal peptide directing secretion. Residues 32 to 126 (GRDSPQDFVF…IEEGTTLQRR (95 aa)) are beta-1. The Extracellular portion of the chain corresponds to 32-230 (GRDSPQDFVF…RAQSESAQSK (199 aa)). 2 disulfides stabilise this stretch: C47-C111 and C149-C205. An N-linked (GlcNAc...) asparagine glycan is attached at N51. Residues 127–220 (VQPTVTISPS…SLQNPILVEW (94 aa)) form a beta-2 region. Positions 129–233 (PTVTISPSKA…SESAQSKMLS (105 aa)) constitute an Ig-like C1-type domain. The interval 221–230 (RAQSESAQSK) is connecting peptide. The chain crosses the membrane as a helical span at residues 231–251 (MLSGVGGFVLGLIFLGLGLFI). The Cytoplasmic portion of the chain corresponds to 252–261 (RHRSQKGLVR).

Belongs to the MHC class II family.

Its subcellular location is the membrane. This Sus scrofa (Pig) protein is SLA class II histocompatibility antigen, DQ haplotype C beta chain.